The chain runs to 561 residues: Dihydroxy-acid dehydratase (561 aa).

Residue cysteine 51 participates in [2Fe-2S] cluster binding. Mg(2+) is bound at residue aspartate 83. Position 124 (cysteine 124) interacts with [2Fe-2S] cluster. Mg(2+) contacts are provided by aspartate 125 and lysine 126. Lysine 126 carries the post-translational modification N6-carboxylysine. Cysteine 196 is a binding site for [2Fe-2S] cluster. Glutamate 448 lines the Mg(2+) pocket. The Proton acceptor role is filled by serine 474.

It belongs to the IlvD/Edd family. As to quaternary structure, homodimer. Requires [2Fe-2S] cluster as cofactor. Mg(2+) serves as cofactor.

It carries out the reaction (2R)-2,3-dihydroxy-3-methylbutanoate = 3-methyl-2-oxobutanoate + H2O. It catalyses the reaction (2R,3R)-2,3-dihydroxy-3-methylpentanoate = (S)-3-methyl-2-oxopentanoate + H2O. The protein operates within amino-acid biosynthesis; L-isoleucine biosynthesis; L-isoleucine from 2-oxobutanoate: step 3/4. It functions in the pathway amino-acid biosynthesis; L-valine biosynthesis; L-valine from pyruvate: step 3/4. Functions in the biosynthesis of branched-chain amino acids. Catalyzes the dehydration of (2R,3R)-2,3-dihydroxy-3-methylpentanoate (2,3-dihydroxy-3-methylvalerate) into 2-oxo-3-methylpentanoate (2-oxo-3-methylvalerate) and of (2R)-2,3-dihydroxy-3-methylbutanoate (2,3-dihydroxyisovalerate) into 2-oxo-3-methylbutanoate (2-oxoisovalerate), the penultimate precursor to L-isoleucine and L-valine, respectively. The chain is Dihydroxy-acid dehydratase from Pyrobaculum neutrophilum (strain DSM 2338 / JCM 9278 / NBRC 100436 / V24Sta) (Thermoproteus neutrophilus).